The primary structure comprises 152 residues: Bacchus (152 aa).

Over residues 29–41 the composition is skewed to basic and acidic residues; it reads DLKAKAAAEDKAA. Residues 29–152 are disordered; it reads DLKAKAAAED…DDGSGSDDQA (124 aa). The span at 42 to 51 shows a compositional bias: low complexity; it reads AADAAGDAAD. Basic and acidic residues predominate over residues 72 to 89; it reads ESVKGTKRPAEAKSAESK. The span at 99–152 shows a compositional bias: acidic residues; that stretch reads GDSDEEEALEEIIEGDSEIESDEYDIPYDGEEDDIECDDDDDDNDDGSGSDDQA.

Expressed in the brain.

Its subcellular location is the nucleus. Its function is as follows. Negatively regulates tyramine beta-hydroxylase tbh and thus the conversion of tyramine (TA) to octopamine (OA). In tyrosine decarboxylase 2 (Tdc2) neurons, acts in an amine-mediated signaling pathway to negatively regulate acute ethanol sensitivity probably via tbh-mediated depletion of TA. This chain is Bacchus, found in Drosophila melanogaster (Fruit fly).